The primary structure comprises 349 residues: tRNA pseudouridine synthase D (349 aa).

Position 27 (F27) interacts with substrate. D80 functions as the Nucleophile in the catalytic mechanism. Substrate is bound at residue N129. The 149-residue stretch at G155–L303 folds into the TRUD domain. Position 329 (F329) interacts with substrate.

Belongs to the pseudouridine synthase TruD family.

It carries out the reaction uridine(13) in tRNA = pseudouridine(13) in tRNA. In terms of biological role, responsible for synthesis of pseudouridine from uracil-13 in transfer RNAs. This Escherichia coli O17:K52:H18 (strain UMN026 / ExPEC) protein is tRNA pseudouridine synthase D.